Consider the following 283-residue polypeptide: Pantothenate synthetase (283 aa).

Residue 30–37 (MGALHRGH) coordinates ATP. His37 (proton donor) is an active-site residue. Residue Gln61 participates in (R)-pantoate binding. Gln61 provides a ligand contact to beta-alanine. Position 147–150 (147–150 (GQKD)) interacts with ATP. Gln153 is a (R)-pantoate binding site. Residues Ile176 and 184 to 187 (MSSR) each bind ATP.

This sequence belongs to the pantothenate synthetase family. As to quaternary structure, homodimer.

It is found in the cytoplasm. The enzyme catalyses (R)-pantoate + beta-alanine + ATP = (R)-pantothenate + AMP + diphosphate + H(+). Its pathway is cofactor biosynthesis; (R)-pantothenate biosynthesis; (R)-pantothenate from (R)-pantoate and beta-alanine: step 1/1. In terms of biological role, catalyzes the condensation of pantoate with beta-alanine in an ATP-dependent reaction via a pantoyl-adenylate intermediate. The chain is Pantothenate synthetase from Cytophaga hutchinsonii (strain ATCC 33406 / DSM 1761 / CIP 103989 / NBRC 15051 / NCIMB 9469 / D465).